The following is a 93-amino-acid chain: Cell division topological specificity factor (93 aa).

It belongs to the MinE family.

Its function is as follows. Prevents the cell division inhibition by proteins MinC and MinD at internal division sites while permitting inhibition at polar sites. This ensures cell division at the proper site by restricting the formation of a division septum at the midpoint of the long axis of the cell. In Syntrophus aciditrophicus (strain SB), this protein is Cell division topological specificity factor.